A 226-amino-acid polypeptide reads, in one-letter code: UPF0173 metal-dependent hydrolase TM_1162 (226 aa).

Belongs to the UPF0173 family.

The protein is UPF0173 metal-dependent hydrolase TM_1162 of Thermotoga maritima (strain ATCC 43589 / DSM 3109 / JCM 10099 / NBRC 100826 / MSB8).